Here is a 438-residue protein sequence, read N- to C-terminus: uncharacterized protein (438 aa).

12 consecutive transmembrane segments (helical) span residues 22-42 (VSPI…GGFG), 59-79 (SAAL…AGLF), 89-109 (IVKG…MLIA), 137-157 (MVMA…TPWG), 174-194 (FFVP…FLAF), 237-257 (LIYL…LGTK), 258-278 (HPSV…YPNV), 292-312 (AITV…LSGT), 330-350 (MGGF…FVLS), 356-376 (FGMV…PVEI), 380-400 (SIMG…VLLV), and 418-438 (AVIT…ITIL).

The protein belongs to the CitM (TC 2.A.11) transporter family.

It localises to the cell membrane. Its function is as follows. Transports the free citrate anion. This is an uncharacterized protein from Bacillus subtilis (strain 168).